The sequence spans 159 residues: MEAERPQEEDGEQSLPQDDQGWPPVNATARPWRSAPPSPPPPGTRHTALGPRSGSLLSLQTELLLDLVAEAQSRRLEEQRATFHTPEAPPNLAPAPPRLLEDKEQLYSTILSHQCQRIEAQRSDPPLPPGGQELLELLLRVQGGGRMEEQRSRPPTHTC.

The disordered stretch occupies residues 1-54; that stretch reads MEAERPQEEDGEQSLPQDDQGWPPVNATARPWRSAPPSPPPPGTRHTALGPRSG. Phosphoserine is present on residues Ser-34, Ser-38, Ser-55, and Ser-58. The segment covering 34–43 has biased composition (pro residues); that stretch reads SAPPSPPPPG. Thr-61 is subject to Phosphothreonine. In terms of domain architecture, GoLoco 1 spans 61–83; sequence TELLLDLVAEAQSRRLEEQRATF. The disordered stretch occupies residues 77–97; sequence EEQRATFHTPEAPPNLAPAPP. Positions 87-97 are enriched in pro residues; that stretch reads EAPPNLAPAPP. 2 GoLoco domains span residues 103–125 and 131–154; these read KEQL…RSDP and GQEL…RSRP.

Its subcellular location is the cytoplasm. Interacts with subunit of G(i) alpha proteins and regulates the activation of G(i) alpha proteins. This is G-protein-signaling modulator 3 (Gpsm3) from Mus musculus (Mouse).